Here is a 178-residue protein sequence, read N- to C-terminus: Fibroin heavy chain (178 aa).

The signal sequence occupies residues 1-21; the sequence is MRVKTFVILCCALQYVAYTNA. The highly repetitive stretch occupies residues 149-178; the sequence is AVGAGAGAGAAAGSGAGAGAGYGAASGAGA.

In terms of assembly, silk fibroin elementary unit consists in a disulfide-linked heavy and light chain and a p25 glycoprotein in molar ratios of 6:6:1. This results in a complex of approximately 2.3 MDa. The interchain disulfide bridge is essential for the intracellular transport and secretion of fibroin. As to expression, produced exclusively in the posterior (PSG) section of silk glands, which are essentially modified salivary glands.

In terms of biological role, core component of the silk filament; a strong, insoluble and chemically inert fiber. This Bombyx mandarina (Wild silk moth) protein is Fibroin heavy chain (FIBH).